A 323-amino-acid chain; its full sequence is ATP synthase gamma chain (323 aa).

Belongs to the ATPase gamma chain family. F-type ATPases have 2 components, CF(1) - the catalytic core - and CF(0) - the membrane proton channel. CF(1) has five subunits: alpha(3), beta(3), gamma(1), delta(1), epsilon(1). CF(0) has three main subunits: a, b and c.

It localises to the cell inner membrane. Functionally, produces ATP from ADP in the presence of a proton gradient across the membrane. The gamma chain is believed to be important in regulating ATPase activity and the flow of protons through the CF(0) complex. This Rickettsia rickettsii (strain Iowa) protein is ATP synthase gamma chain.